We begin with the raw amino-acid sequence, 653 residues long: MAKRKEVILQETLNTQEAWEVAMNSGKLYVVDAHQKWCGPCTAIVGMLKRIKNELGDDLLRFATAQVDVIDTLEQYRGKCEPNFLFYGGGELVAAVRGCNAPLVQETIQETLKNEHKILSGEMERKVFRDVYSDTPDQEEEEEDEEEEEGGVVSKQITVALIKPDVVQNGQVDEILQKISEAGIEVLADEERMLTVEEARDFYKNKEEEEYFDQLIDYVTSGPCRVLVLTKGESGEGVVTLWRDIIGPFDAAVAKEENPDSLRAIYGTDATSNALHGSSSTEEAVRELGFFFPDFKPPTYRSAKSAASRASGRRSKTPSQKPRLQRTLAIIRPDALQAHKDSILQKIDEAGFKIAMQKEMVLTREQAESFYSEHKDTDYFEPLVKQMTCGPVLALCLAHDDAVDHWRSMLGPKVVADAVEEQPDSLRAQFRVEEAEVNMLHGSDSAEAAEEELSKIFHVEQTLAVIKPDAIDEKEQIMGKLKEAGFMISCQKDMNLSKEIASEIYKSKEGSEYYDHLIDHMTSGPTLMMVLSAENAVEKLRDIMGPTDPEVAKESHPESLRAMFAKSILENAIHSPSTNESAQEKIRIVFGDAQFDWDVNDMQAEEGEVNETSGEQPTDEQSGETEKTEEDGEHEGAQSDQQQAVSEAMEKEE.

Residues 9–114 (LQETLNTQEA…QETIQETLKN (106 aa)) form the Thioredoxin domain. Cysteine 38 and cysteine 41 are oxidised to a cystine. The segment at 155–299 (KQITVALIKP…FFFPDFKPPT (145 aa)) is NDK 1. A disordered region spans residues 300 to 323 (YRSAKSAASRASGRRSKTPSQKPR). A compositionally biased stretch (low complexity) spans 301 to 310 (RSAKSAASRA). 2 NDK regions span residues 324–459 (LQRT…IFHV) and 459–597 (VEQT…QFDW). Residues 603–653 (QAEEGEVNETSGEQPTDEQSGETEKTEEDGEHEGAQSDQQQAVSEAMEKEE) form a disordered region. The segment covering 617–633 (PTDEQSGETEKTEEDGE) has biased composition (acidic residues).

This sequence in the C-terminal section; belongs to the NDK family. As to expression, testis-specific.

Its function is as follows. May be required during the final stages of sperm tail maturation. May act by reducing disulfide bonds within the sperm components. The sequence is that of Thioredoxin domain-containing protein 3 homolog (CiIC3) from Ciona intestinalis (Transparent sea squirt).